The following is a 591-amino-acid chain: Protein NRT1/ PTR FAMILY 1.1 (591 aa).

A run of 11 helical transmembrane segments spans residues 68–88, 98–118, 139–159, 186–206, 216–236, 329–349, 374–394, 418–438, 460–480, 496–516, and 543–563; these read TVLF…AFLS, IVIA…TAML, SSQL…SGGI, FFGW…TVIV, IGFG…VFAS, LKAL…SINV, IPAG…VVLY, MGLG…VEHY, AMWL…TGIG, IAAS…SVIL, and YYWV…VCSW.

The protein belongs to the major facilitator superfamily. Proton-dependent oligopeptide transporter (POT/PTR) (TC 2.A.17) family. Expressed in siliques, shoots and roots. Mainly detected in larger expanded leaves, in the companion cells of major veins.

Its subcellular location is the cell membrane. Its function is as follows. Low-affinity nitrate transporter involved in xylem-to-phloem transfer for redistributing nitrate into developing leaves. Not involved in dipeptides transport. The protein is Protein NRT1/ PTR FAMILY 1.1 (NPF1.1) of Arabidopsis thaliana (Mouse-ear cress).